Consider the following 417-residue polypeptide: Phosphoglycerate kinase 1 (417 aa).

Ser-2 is modified (N-acetylserine). Residues Ser-2 and Ser-4 each carry the phosphoserine modification. Lys-6 is modified (N6-succinyllysine). An N6-acetyllysine modification is found at Lys-11. Val-23, Asp-24, Phe-25, Asn-26, Gln-38, and Arg-39 together coordinate (2R)-3-phosphoglycerate. The interval 38–43 is mitochondrial targeting region exposed following cis-trans isomerization by PIN1 and recognized by the TOM complex for mitochondrial translocation of the protein; that stretch reads QRIKAA. An N6-acetyllysine; alternate modification is found at Lys-48. Position 48 is an N6-succinyllysine; alternate (Lys-48). The (2R)-3-phosphoglycerate site is built by Ser-62, His-63, Gly-65, and Arg-66. Lys-75 bears the N6-acetyllysine mark. Residue Tyr-76 is modified to Phosphotyrosine. N6-acetyllysine is present on residues Lys-86 and Lys-91. An N6-acetyllysine; alternate modification is found at Lys-97. Lys-97 bears the N6-(2-hydroxyisobutyryl)lysine; alternate mark. (2R)-3-phosphoglycerate is bound by residues Leu-122 and Arg-123. N6-acetyllysine; alternate is present on Lys-131. Lys-131 carries the N6-malonyllysine; alternate modification. N6-acetyllysine is present on Lys-146. (2R)-3-phosphoglycerate is bound by residues His-170 and Arg-171. Lys-191 bears the N6-succinyllysine mark. Phosphotyrosine is present on Tyr-196. Position 199 is an N6-acetyllysine (Lys-199). Ser-203 is modified (phosphoserine). An ADP-binding site is contributed by Gly-214. Gly-214 contributes to the CDP binding site. AMP is bound by residues Ala-215 and Lys-216. Residue Ala-215 participates in ATP binding. Residue Ala-215 coordinates Mg(2+). Position 216 is an N6-(2-hydroxyisobutyryl)lysine (Lys-216). Positions 218 and 219 each coordinate Mg(2+). Asp-219 serves as a coordination point for CDP. Lys-220 contacts AMP. Lys-220 contributes to the ATP binding site. Lys-220 carries the N6-(2-hydroxyisobutyryl)lysine modification. An ADP-binding site is contributed by Gly-238. A CDP-binding site is contributed by Gly-238. Gly-239 is an AMP binding site. Gly-239 is an ATP binding site. 2 positions are modified to N6-acetyllysine: Lys-267 and Lys-291. Residue Gly-313 coordinates AMP. Residue Gly-313 coordinates ATP. Residue Lys-323 is modified to N6-(2-hydroxyisobutyryl)lysine. CDP is bound by residues Gly-338, Val-340, and Phe-343. Phe-343 is an ADP binding site. Glu-344 lines the AMP pocket. Glu-344 contacts ATP. Lys-361 is subject to N6-acetyllysine. Residues Asp-375 and Thr-376 each coordinate ATP. Asp-375 serves as a coordination point for Mg(2+).

The protein belongs to the phosphoglycerate kinase family. In terms of assembly, monomer. Interacts with kinase MAPK1/ERK2; the interaction is direct, occurs under hypoxic conditions, and promotes its interaction with PIN1. Interacts with peptidyl-prolyl cis-trans isomerase PIN1; the interaction is direct, occurs under hypoxic conditions, and targets the protein to the mitochondrion by promoting interactions with the TOM complex. Interacts with mitochondrial circRNA mcPGK1 (via its 2nd stem-loop); the interaction is direct and targets the protein to the mitochondrion by promoting interactions with the TOM complex. Interacts with pyruvate dehydrogenase kinase PDK1; the interaction is direct, occurs under hypoxic conditions and leads to PDK1-mediated inhibition of pyruvate dehydrogenase complex activity. Requires Mg(2+) as cofactor. In terms of processing, phosphorylated at Ser-203 by MAPK1/ERK2 under hypoxic conditions, which promotes its mitochondrial targeting.

The protein resides in the cytoplasm. It localises to the cytosol. It is found in the mitochondrion matrix. It carries out the reaction (2R)-3-phosphoglycerate + ATP = (2R)-3-phospho-glyceroyl phosphate + ADP. The catalysed reaction is L-seryl-[protein] + ATP = O-phospho-L-seryl-[protein] + ADP + H(+). It participates in carbohydrate degradation; glycolysis; pyruvate from D-glyceraldehyde 3-phosphate: step 2/5. Functionally, catalyzes one of the two ATP producing reactions in the glycolytic pathway via the reversible conversion of 1,3-diphosphoglycerate to 3-phosphoglycerate. Both L- and D- forms of purine and pyrimidine nucleotides can be used as substrates, but the activity is much lower on pyrimidines. In addition to its role as a glycolytic enzyme, it seems that PGK-1 acts as a polymerase alpha cofactor protein (primer recognition protein). Acts as a protein kinase when localized to the mitochondrion where it phosphorylates pyruvate dehydrogenase kinase PDK1 to inhibit pyruvate dehydrogenase complex activity and suppress the formation of acetyl-coenzyme A from pyruvate, and consequently inhibit oxidative phosphorylation and promote glycolysis. May play a role in sperm motility. This Cricetulus griseus (Chinese hamster) protein is Phosphoglycerate kinase 1 (PGK1).